We begin with the raw amino-acid sequence, 163 residues long: UPF0262 protein RPB_4349 (163 aa).

The protein belongs to the UPF0262 family.

This chain is UPF0262 protein RPB_4349, found in Rhodopseudomonas palustris (strain HaA2).